The primary structure comprises 780 residues: Pumilio domain-containing protein C4G8.03c (780 aa).

Disordered stretches follow at residues 1–29, 298–330, and 358–411; these read MVNR…LSSY, LSHF…LHSK, and NHHS…GKTV. Basic and acidic residues predominate over residues 298-307; sequence LSHFPDHLDP. Residues 311 to 322 are compositionally biased toward low complexity; the sequence is PSPYQPSSLQPL. A compositionally biased stretch (polar residues) spans 358 to 382; sequence NHHSSLSMDNDPTNVSTKNRNNQTV. The PUM-HD domain maps to 435–778; sequence EKSDDLSNLL…HILAKLTSST (344 aa). Pumilio repeat units follow at residues 462-497, 498-533, 534-569, 570-606, 607-642, 643-678, 679-714, 715-752, and 753-780; these read GFLG…LFFP, EIRQ…SMLN, GIGE…SLLL, KIII…PLFL, SMEE…RLVN, SIIK…RIIE, KFFG…QMLQ, EFLS…LILR, and SISH…STSS.

This chain is Pumilio domain-containing protein C4G8.03c, found in Schizosaccharomyces pombe (strain 972 / ATCC 24843) (Fission yeast).